We begin with the raw amino-acid sequence, 423 residues long: ATP-citrate synthase alpha chain protein 1 (423 aa).

Citrate contacts are provided by N343, T345, and R376.

This sequence belongs to the succinate/malate CoA ligase beta subunit family. Heterooctamer of 4 alpha and 4 beta chains. Expressed in trichomes, epidermal leaf cells, anther tapetal cells, stigma and in young vascular bundles of expanding leaves, cotyledons, roots, pedicel of flowers and siliques.

The protein localises to the cytoplasm. It is found in the cytosol. It carries out the reaction oxaloacetate + acetyl-CoA + ADP + phosphate = citrate + ATP + CoA. In terms of biological role, ATP citrate-lyase is the primary enzyme responsible for the synthesis of cytosolic acetyl-CoA, used for the elongation of fatty acids and biosynthesis of isoprenoids, flavonoids and malonated derivatives. May supply substrate to the cytosolic acetyl-CoA carboxylase, which generates the malonyl-CoA used for the synthesis of a multitude of compounds, including very long chain fatty acids and flavonoids. Required for normal growth and development and elongation of C18 fatty acids to C20 to C24 fatty acids in seeds. In contrast to all known animal ACL enzymes having a homomeric structure, plant ACLs are composed of alpha and beta chains. The polypeptide is ATP-citrate synthase alpha chain protein 1 (ACLA-1) (Arabidopsis thaliana (Mouse-ear cress)).